We begin with the raw amino-acid sequence, 146 residues long: D-aminoacyl-tRNA deacylase (146 aa).

The Gly-cisPro motif, important for rejection of L-amino acids motif lies at 137-138 (GP).

Belongs to the DTD family. In terms of assembly, homodimer.

It is found in the cytoplasm. The catalysed reaction is glycyl-tRNA(Ala) + H2O = tRNA(Ala) + glycine + H(+). The enzyme catalyses a D-aminoacyl-tRNA + H2O = a tRNA + a D-alpha-amino acid + H(+). In terms of biological role, an aminoacyl-tRNA editing enzyme that deacylates mischarged D-aminoacyl-tRNAs. Also deacylates mischarged glycyl-tRNA(Ala), protecting cells against glycine mischarging by AlaRS. Acts via tRNA-based rather than protein-based catalysis; rejects L-amino acids rather than detecting D-amino acids in the active site. By recycling D-aminoacyl-tRNA to D-amino acids and free tRNA molecules, this enzyme counteracts the toxicity associated with the formation of D-aminoacyl-tRNA entities in vivo and helps enforce protein L-homochirality. In Variovorax paradoxus (strain S110), this protein is D-aminoacyl-tRNA deacylase.